The following is a 1498-amino-acid chain: DNA-directed RNA polymerase subunit beta' (1498 aa).

Cys67, Cys69, Cys82, and Cys85 together coordinate Zn(2+). Mg(2+) is bound by residues Asp499, Asp501, and Asp503. Residues Cys867, Cys943, Cys950, and Cys953 each contribute to the Zn(2+) site.

Belongs to the RNA polymerase beta' chain family. The RNAP catalytic core consists of 2 alpha, 1 beta, 1 beta' and 1 omega subunit. When a sigma factor is associated with the core the holoenzyme is formed, which can initiate transcription. Requires Mg(2+) as cofactor. It depends on Zn(2+) as a cofactor.

It carries out the reaction RNA(n) + a ribonucleoside 5'-triphosphate = RNA(n+1) + diphosphate. In terms of biological role, DNA-dependent RNA polymerase catalyzes the transcription of DNA into RNA using the four ribonucleoside triphosphates as substrates. This is DNA-directed RNA polymerase subunit beta' from Chlorobium phaeobacteroides (strain BS1).